A 1006-amino-acid chain; its full sequence is E3 ubiquitin-protein ligase MIB1 (1006 aa).

The MIB/HERC2 1 domain occupies 6–74; it reads NNRVMVEGVG…AYDLRILDSA (69 aa). The segment at 80–132 adopts a ZZ-type zinc-finger fold; the sequence is HDGTMCDTCRQQPIIGIRWKCAECTNYDLCTVCYHGDKHHLRHRFYRITTPGS. Zn(2+)-binding residues include cysteine 85, cysteine 88, cysteine 100, cysteine 103, cysteine 109, cysteine 112, histidine 118, and histidine 122. An MIB/HERC2 2 domain is found at 143-221; that stretch reads SKKITARGIF…MSDLKCVQDA (79 aa). Position 408 is a phosphoserine (serine 408). 9 ANK repeats span residues 430–460, 463–492, 496–525, 529–558, 562–591, 595–627, 631–661, 665–694, and 698–729; these read DLNE…DVNG, AGHT…DVEA, DGDR…DLNA, RRQT…HPSL, EGDT…DVTI, NGFN…IVDE, DGYT…NLDI, NQQT…KLDI, and DGDT…KVDA. 2 consecutive RING-type zinc fingers follow at residues 819–854 and 866–901; these read CMVC…LICK and CVVC…VQCR. Residues 935 to 962 are a coiled coil; it reads QKDKDNTNVNADVQKLQQQLQDIKEQTM. The RING-type 3 zinc finger occupies 963–996; sequence CPVCLDRLKNMIFLCGHGTCQLCGDRMSECPICR.

As to quaternary structure, interacts with CEP131 and PCM1. In terms of processing, ubiquitinated; possibly via autoubiquitination. Ubiquitinated; this modification is inhibited in response to cellular stress, such as ultraviolet light (UV) radiation or heat shock. Widely expressed at low level. Expressed at higher level in spinal cord, ovary, whole brain, and all specific brain regions examined.

Its subcellular location is the cytoplasm. The protein localises to the cytoskeleton. The protein resides in the microtubule organizing center. It localises to the centrosome. It is found in the centriolar satellite. Its subcellular location is the cell membrane. It carries out the reaction S-ubiquitinyl-[E2 ubiquitin-conjugating enzyme]-L-cysteine + [acceptor protein]-L-lysine = [E2 ubiquitin-conjugating enzyme]-L-cysteine + N(6)-ubiquitinyl-[acceptor protein]-L-lysine.. Its pathway is protein modification; protein ubiquitination. Functionally, E3 ubiquitin-protein ligase that mediates ubiquitination of Delta receptors, which act as ligands of Notch proteins. Positively regulates the Delta-mediated Notch signaling by ubiquitinating the intracellular domain of Delta, leading to endocytosis of Delta receptors. Probably mediates ubiquitination and subsequent proteasomal degradation of DAPK1, thereby antagonizing anti-apoptotic effects of DAPK1 to promote TNF-induced apoptosis. Involved in ubiquitination of centriolar satellite CEP131, CEP290 and PCM1 proteins and hence inhibits primary cilium formation in proliferating cells. Mediates 'Lys-63'-linked polyubiquitination of TBK1, which probably participates in kinase activation. (Microbial infection) During adenovirus infection, mediates ubiquitination of Core-capsid bridging protein. This allows viral genome delivery into nucleus for infection. The protein is E3 ubiquitin-protein ligase MIB1 (MIB1) of Homo sapiens (Human).